The primary structure comprises 904 residues: Structural polyprotein (904 aa).

Disordered regions lie at residues 1–27, 35–54, and 320–348; these read ADQETNTSNVHNTQLASTSEENSVETE, VETPNRINTPMAQDTSSARS, and NNSNKMATPVKEKTKNIPKPKTENPKIGP. A compositionally biased stretch (polar residues) spans 39 to 53; it reads NRINTPMAQDTSSAR. Over residues 329–343 the composition is skewed to basic and acidic residues; it reads VKEKTKNIPKPKTEN.

It belongs to the picornaviruses polyprotein family. Specific enzymatic cleavages in vivo yield mature proteins.

It is found in the virion. Its subcellular location is the host cytoplasm. Functionally, structural polyprotein: precursor of all the viral capsid proteins. In terms of biological role, forms, together with protein VP2 and protein VP3, an icosahedral capsid protecting the viral RNA genome. The icosahedral capsid has a pseudo-T=3 symmetry with a diameter of approximately 300 Angstroms, and is composed of 60 copies of each capsid proteins. Forms, together with protein VP1 and protein VP3, an icosahedral capsid protecting the viral RNA genome. The icosahedral capsid has a pseudo-T=3 symmetry with a diameter of approximately 300 Angstroms, and is composed of 60 copies of each capsid proteins. Its function is as follows. Forms, together with protein VP1 and protein VP2, an icosahedral capsid protecting the viral RNA genome. The icosahedral capsid has a pseudo-T=3 symmetry with a diameter of approximately 300 Angstroms, and is composed of 60 copies of each capsid proteins. The protein is Structural polyprotein of Apis mellifera (Honeybee).